Reading from the N-terminus, the 174-residue chain is Adipose-secreted signaling protein (174 aa).

Residue Ala-2 is modified to N-acetylalanine. Residue Thr-147 is modified to Phosphothreonine.

The protein belongs to the ADISSP family. Expression is adipose-specific and highly brown adipose tissue-enriched.

The protein resides in the secreted. Functionally, adipocyte-secreted protein (adipokine) that acts as a key regulator for white adipose tissue (WAT) thermogenesis and glucose homeostasis at least in part through activation of protein kinase A (PKA). In Mus musculus (Mouse), this protein is Adipose-secreted signaling protein.